The primary structure comprises 156 residues: uncharacterized protein (156 aa).

This is an uncharacterized protein from Bacillus subtilis (strain 168).